The sequence spans 557 residues: DNA replication factor Cdt1 (557 aa).

The short motif at 1–25 (MAQSRVTDFYACRRPGLTTPRAKSI) is the PIP-box K+4 motif element. A disordered region spans residues 20–113 (PRAKSICLTP…VCPSPVKRTK (94 aa)). Threonine 28 carries the post-translational modification Phosphothreonine; by MAPK8. Serine 30 carries the post-translational modification Phosphoserine. The Cyclin-binding motif signature appears at 65-67 (RRL). Residues 69–81 (LPGLDSCPSSLPE) are compositionally biased toward low complexity. A compositionally biased stretch (pro residues) spans 82–106 (PSSPAEPSPPADPSPPADPGSPVCP). Residue serine 107 is modified to Phosphoserine; by MAPK8. Residues 163–203 (PSTPDAKVPTEQPCVEKAPAYQRFHALAQPGLPGLVLPYKY) form an interaction with GMNN region. Residue serine 392 is modified to Phosphoserine. Positions 397 to 427 (RSAEPGSPGTSTPPLPATPPATPPAASPSAL) are disordered. Residues 407 to 422 (STPPLPATPPATPPAA) are compositionally biased toward pro residues. Positions 463–557 (LERLPELARV…LAHHVHAEGL (95 aa)) are interaction with LRWD1.

This sequence belongs to the Cdt1 family. As to quaternary structure, interacts with GMNN; the interaction inhibits the binding of the MCM complex to origins of replication. Interacts with MCM6. Interacts with CDC6; are mutually dependent on one another for loading MCM complexes onto chromatin. Interacts with PCNA. Interacts with LRWD1 during G1 phase and during mitosis. Interacts with NDC80 subunit of the NDC80 complex; leading to kinetochore localization. Interacts with KAT7. Interacts with ubiquitin-binding protein FAF1; the interaction is likely to promote CDT1 degradation. In terms of processing, two independent E3 ubiquitin ligase complexes, SCF(SKP2) and the DCX(DTL) complex, mediated CDT1 degradation in S phase. Ubiquitinated by the DCX(DTL) complex, in response to DNA damage, leading to its degradation. Ubiquitination by the DCX(DTL) complex is necessary to ensure proper cell cycle regulation and is PCNA-dependent: interacts with PCNA via its PIP-box, while the presence of the containing the 'K+4' motif in the PIP box, recruit the DCX(DTL) complex, leading to its degradation. Phosphorylation at Thr-28 by CDK2 targets CDT1 for ubiquitynation by SCF(SKP2) E3 ubiquitin ligase and subsequent degradation. The interaction with GMNN protects it against ubiquitination. Deubiquitinated by USP37. Ubiquitinated and degraded by the SCF(FBXO31) complex during the G2 phase to prevent re-replication. Post-translationally, phosphorylation by cyclin A-dependent kinases at Thr-28 targets CDT1 for ubiquitynation by SCF(SKP2) E3 ubiquitin ligase and subsequent degradation. Phosphorylated at Thr-28 by MAPK8/JNK1, which blocks replication licensing in response to stress. Binding to GMNN is not affected by phosphorylation.

The protein localises to the nucleus. It is found in the chromosome. It localises to the centromere. Its subcellular location is the kinetochore. Its function is as follows. Required for both DNA replication and mitosis. DNA replication licensing factor, required for pre-replication complex assembly. Cooperates with CDC6 and the origin recognition complex (ORC) during G1 phase of the cell cycle to promote the loading of the mini-chromosome maintenance (MCM) complex onto DNA to generate pre-replication complexes (pre-RC). Required also for mitosis by promoting stable kinetochore-microtubule attachments. Potential oncogene. In Mus musculus (Mouse), this protein is DNA replication factor Cdt1.